The chain runs to 182 residues: Transcription repressor OFP11 (182 aa).

The tract at residues Pro-62–Ser-94 is disordered. The 66-residue stretch at Met-104–Trp-169 folds into the OVATE domain.

As to expression, expressed in roots, rosette and cauline leaves, shoots, stems, flower buds and siliques.

It localises to the nucleus. Transcriptional repressor that may regulate multiple aspects of plant growth and development through the regulation of BEL1-LIKE (BLH) and KNOX TALE (KNAT) homeodomain transcription factors. This Arabidopsis thaliana (Mouse-ear cress) protein is Transcription repressor OFP11 (OFP11).